A 579-amino-acid chain; its full sequence is MKYVVVSGGVISGIGKGVLASSTGMLMKTLGLKVTSIKIDPYMNIDAGTMSPLEHGECFVLDDGGETDLDLGNYERYLGVTLTKDHNITTGKIYSHVIAKERKGDYLGKTVQIVPHLTNAIQDWIERVAKIPVDDTGMEPDVCIIELGGTVGDIESAPFVEALRQFQFKVGKENFALIHVSLVPVIHGEQKTKPTQAAIKGLRSLGLVPDMIACRCSETLDKPTIDKIAMFCHVGPEQVVNVHDVNSTYHVPLLLLEQKMIDYLHARLKLDEISLTEEEKQRGLELLSKWKATTGNFDESMETVKIALVGKYTNLKDSYLSVIKALEHSSMKCRRKLDIKWVEATDLEPEAQESNKTKFHEAWNMVSTADGILIPGGFGVRGTEGMVLAARWARENHIPFLGVCLGLQIATIEFTRSVLGRKDSHSAEFYPDIDEKNHVVVFMPEIDKETMGGSMRLGLRPTFFQNETEWSQIKKLYGDVSEVHERHRHRYEINPKMVDELENNGLIFVGKDDTGKRCEILELKNHPYYIATQYHPEYTSKVLDPSKPFLGLVAASAGILQDVIEGKYDLEAGENKFNF.

Residues 305-559 enclose the Glutamine amidotransferase type-1 domain; that stretch reads KIALVGKYTN…LGLVAASAGI (255 aa). Catalysis depends on C404, which acts as the For GATase activity. K422 participates in a covalent cross-link: Glycyl lysine isopeptide (Lys-Gly) (interchain with G-Cter in ubiquitin). Active-site for GATase activity residues include H535 and E537.

This sequence belongs to the CTP synthase family. As to quaternary structure, homodimer. Oligomerizes to a tetramer in the presence of its substrates UTP and ATP.

The enzyme catalyses UTP + L-glutamine + ATP + H2O = CTP + L-glutamate + ADP + phosphate + 2 H(+). It functions in the pathway pyrimidine metabolism; CTP biosynthesis via de novo pathway; CTP from UDP: step 2/2. Its activity is regulated as follows. Activated by GTP and inhibited by CTP. Functionally, catalyzes the ATP-dependent amination of UTP to CTP with either L-glutamine or ammonia as the source of nitrogen. The polypeptide is CTP synthase 1 (URA7) (Saccharomyces cerevisiae (strain ATCC 204508 / S288c) (Baker's yeast)).